Consider the following 1611-residue polypeptide: Pentafunctional AROM polypeptide (1611 aa).

The 3-dehydroquinate synthase stretch occupies residues 1–391; sequence MSSSSADVLK…YEEKASVVAD (391 aa). NAD(+) is bound by residues 47-49, 84-87, 115-117, and Asp120; these read DTN, EGAK, and GGV. Arg131 is a binding site for 7-phospho-2-dehydro-3-deoxy-D-arabino-heptonate. Residue 140–141 participates in NAD(+) binding; the sequence is TT. 2 residues coordinate 7-phospho-2-dehydro-3-deoxy-D-arabino-heptonate: Asp147 and Lys153. Lys162 serves as a coordination point for NAD(+). Asn163 contacts 7-phospho-2-dehydro-3-deoxy-D-arabino-heptonate. NAD(+) is bound by residues 180–183 and Asn191; that span reads FLTT. Glu195 provides a ligand contact to Zn(2+). 7-phospho-2-dehydro-3-deoxy-D-arabino-heptonate contacts are provided by residues 195-198 and Lys257; that span reads EVIK. Residue Glu267 is the Proton acceptor; for 3-dehydroquinate synthase activity of the active site. 7-phospho-2-dehydro-3-deoxy-D-arabino-heptonate contacts are provided by residues 271-275 and His278; that span reads RNLVN. His278 contacts Zn(2+). His282 (proton acceptor; for 3-dehydroquinate synthase activity) is an active-site residue. Residues His294 and Lys363 each contribute to the 7-phospho-2-dehydro-3-deoxy-D-arabino-heptonate site. His294 provides a ligand contact to Zn(2+). The tract at residues 404–863 is EPSP synthase; the sequence is VKAATPTKSP…WDDLQNKIGV (460 aa). Cys845 acts as the For EPSP synthase activity in catalysis. The interval 892–1093 is shikimate kinase; the sequence is DRPIFLIGMR…SVGNPTSFLS (202 aa). Residue 899–906 coordinates ATP; the sequence is GMRGAGKT. The segment at 1094–1318 is 3-dehydroquinase; the sequence is LTFPDVTPAL…AAPGQLTARE (225 aa). The Proton acceptor; for 3-dehydroquinate dehydratase activity role is filled by His1220. Lys1248 serves as the catalytic Schiff-base intermediate with substrate; for 3-dehydroquinate dehydratase activity. Positions 1331-1611 are shikimate dehydrogenase; the sequence is AKKFVLFGSP…RKAVLDKYFA (281 aa).

It in the N-terminal section; belongs to the sugar phosphate cyclases superfamily. Dehydroquinate synthase family. This sequence in the 2nd section; belongs to the EPSP synthase family. The protein in the 3rd section; belongs to the shikimate kinase family. In the 4th section; belongs to the type-I 3-dehydroquinase family. It in the C-terminal section; belongs to the shikimate dehydrogenase family. As to quaternary structure, homodimer. Zn(2+) serves as cofactor.

Its subcellular location is the cytoplasm. The catalysed reaction is 7-phospho-2-dehydro-3-deoxy-D-arabino-heptonate = 3-dehydroquinate + phosphate. It catalyses the reaction 3-dehydroquinate = 3-dehydroshikimate + H2O. It carries out the reaction shikimate + NADP(+) = 3-dehydroshikimate + NADPH + H(+). The enzyme catalyses shikimate + ATP = 3-phosphoshikimate + ADP + H(+). The catalysed reaction is 3-phosphoshikimate + phosphoenolpyruvate = 5-O-(1-carboxyvinyl)-3-phosphoshikimate + phosphate. It functions in the pathway metabolic intermediate biosynthesis; chorismate biosynthesis; chorismate from D-erythrose 4-phosphate and phosphoenolpyruvate: step 2/7. The protein operates within metabolic intermediate biosynthesis; chorismate biosynthesis; chorismate from D-erythrose 4-phosphate and phosphoenolpyruvate: step 3/7. It participates in metabolic intermediate biosynthesis; chorismate biosynthesis; chorismate from D-erythrose 4-phosphate and phosphoenolpyruvate: step 4/7. Its pathway is metabolic intermediate biosynthesis; chorismate biosynthesis; chorismate from D-erythrose 4-phosphate and phosphoenolpyruvate: step 5/7. It functions in the pathway metabolic intermediate biosynthesis; chorismate biosynthesis; chorismate from D-erythrose 4-phosphate and phosphoenolpyruvate: step 6/7. Functionally, the AROM polypeptide catalyzes 5 consecutive enzymatic reactions in prechorismate polyaromatic amino acid biosynthesis. The chain is Pentafunctional AROM polypeptide from Cryptococcus neoformans var. neoformans serotype D (strain B-3501A) (Filobasidiella neoformans).